Reading from the N-terminus, the 501-residue chain is MAINAQEISALIKQQIENFKPNFDVTETGVVTYIGDGIARAHGLENVMSGELLNFENGSYGMAQNLESTDVGIIILGDFTDIREGDTIRRTGKIMEVPVGESLIGRVVDPLGRPVDGLGEIHTDKTRPVEAPAPGVMQRKSVSEPLQTGLKAIDALVPIGRGQRELIIGDRQTGKTTIAIDTILNQKDQDMICIYVAIGQKESTVRTQVETLRQYGALDYTIVVTASASQPSPLLFLAPYAGVAMAEEFMYQGKHVLIVYDDLSKQAVAYRELLLLLRRPPGREAFPGDVFYLHSRLLERSAKVSDELGGGSITALPFIETQAGDISAYIATNVISITDGQIFLGDGLFNAGIRPAIDAGSSVSRVGGSAQIKAMKKVAGTLRIDLASYRELEAFTKFGSDLDAATQAKLNRGRRTVEVLKQPVHKPLPVEKQVTILYALTHGFLDTVPVDDIVRFEEEFHAFFDAQHPEILETIRDTKDLPEEAVLDAAITEFLNQSSFQ.

Position 169 to 176 (Gly169 to Thr176) interacts with ATP.

This sequence belongs to the ATPase alpha/beta chains family. In terms of assembly, F-type ATPases have 2 components, CF(1) - the catalytic core - and CF(0) - the membrane proton channel. CF(1) has five subunits: alpha(3), beta(3), gamma(1), delta(1), epsilon(1). CF(0) has three main subunits: a(1), b(2) and c(9-12). The alpha and beta chains form an alternating ring which encloses part of the gamma chain. CF(1) is attached to CF(0) by a central stalk formed by the gamma and epsilon chains, while a peripheral stalk is formed by the delta and b chains.

The protein localises to the cell membrane. It catalyses the reaction ATP + H2O + 4 H(+)(in) = ADP + phosphate + 5 H(+)(out). Functionally, produces ATP from ADP in the presence of a proton gradient across the membrane. The alpha chain is a regulatory subunit. The chain is ATP synthase subunit alpha from Streptococcus pneumoniae serotype 2 (strain D39 / NCTC 7466).